Reading from the N-terminus, the 605-residue chain is Sulfite reductase [NADPH] flavoprotein alpha-component (605 aa).

One can recognise a Flavodoxin-like domain in the interval 70–208 (LTIIYASQTG…PAAEWRVKAL (139 aa)). Residues 76 to 81 (SQTGNA), 123 to 126 (STHG), and 159 to 168 (LGDSSYEFFC) contribute to the FMN site. The 215-residue stretch at 240-454 (QNPYEATLLT…VEENNNFKLP (215 aa)) folds into the FAD-binding FR-type domain. FAD is bound by residues T328, G362, 392–395 (RLYS), 410–412 (TVG), and 425–428 (GGAS). Residues 525–526 (SR), 531–535 (KVYVQ), and D567 each bind NADP(+). Position 605 (Y605) interacts with FAD.

It belongs to the NADPH-dependent sulphite reductase flavoprotein subunit CysJ family. This sequence in the N-terminal section; belongs to the flavodoxin family. In the C-terminal section; belongs to the flavoprotein pyridine nucleotide cytochrome reductase family. Alpha(8)-beta(8). The alpha component is a flavoprotein, the beta component is a hemoprotein. FAD serves as cofactor. The cofactor is FMN.

It catalyses the reaction hydrogen sulfide + 3 NADP(+) + 3 H2O = sulfite + 3 NADPH + 4 H(+). Its pathway is sulfur metabolism; hydrogen sulfide biosynthesis; hydrogen sulfide from sulfite (NADPH route): step 1/1. In terms of biological role, component of the sulfite reductase complex that catalyzes the 6-electron reduction of sulfite to sulfide. This is one of several activities required for the biosynthesis of L-cysteine from sulfate. The flavoprotein component catalyzes the electron flow from NADPH -&gt; FAD -&gt; FMN to the hemoprotein component. The polypeptide is Sulfite reductase [NADPH] flavoprotein alpha-component (Photobacterium profundum (strain SS9)).